A 104-amino-acid chain; its full sequence is Ubiquitin-related modifier 1 homolog (104 aa).

Gly-104 bears the 1-thioglycine mark. Gly-104 participates in a covalent cross-link: Glycyl lysine isopeptide (Gly-Lys) (interchain with K-? in acceptor proteins).

It belongs to the URM1 family. In terms of assembly, interacts with cer. In terms of processing, C-terminal thiocarboxylation occurs in 2 steps, it is first acyl-adenylated (-COAMP) via the hesA/moeB/thiF part of the MOCS3 homolog, then thiocarboxylated (-COSH) via the rhodanese domain of the MOCS3 homolog.

It is found in the cytoplasm. It functions in the pathway tRNA modification; 5-methoxycarbonylmethyl-2-thiouridine-tRNA biosynthesis. Acts as a sulfur carrier required for 2-thiolation of mcm(5)S(2)U at tRNA wobble positions of cytosolic tRNA(Lys), tRNA(Glu) and tRNA(Gln). Serves as sulfur donor in tRNA 2-thiolation reaction by being thiocarboxylated (-COSH) at its C-terminus by MOCS3. The sulfur is then transferred to tRNA to form 2-thiolation of mcm(5)S(2)U. Also acts as a ubiquitin-like protein (UBL) that is covalently conjugated via an isopeptide bond to lysine residues of target proteins such as Prx2/Jafrac1, Ciao1, Eip71CD and GILT1. The thiocarboxylated form serves as substrate for conjugation and oxidative stress specifically induces the formation of UBL-protein conjugates. The chain is Ubiquitin-related modifier 1 homolog from Drosophila grimshawi (Hawaiian fruit fly).